The chain runs to 230 residues: Androgen-dependent TFPI-regulating protein (230 aa).

Residues 1-3 (MTK) are Cytoplasmic-facing. The chain crosses the membrane as a helical span at residues 4–24 (TSTCIYHFLVLSWYTFLNYYI). The Extracellular segment spans residues 25–46 (SQEGKDEVKPKILANGARWKYM). Residues 47–67 (TLLNLLLQTIFYGVTCLDDVL) form a helical membrane-spanning segment. At 68–85 (KRTKGGKDIKFLTAFRDL) the chain is on the cytoplasmic side. The chain crosses the membrane as a helical span at residues 86 to 106 (LFTTLAFPVSTFVFLAFWILF). Over 107–119 (LYNRDLIYPKVLD) the chain is Extracellular. A helical membrane pass occupies residues 120-140 (TVIPVWLNHAMHTFIFPITLA). At 141 to 154 (EVVLRPHSYPSKKT) the chain is on the cytoplasmic side. The helical transmembrane segment at 155–175 (GLTLLAAASIAYISRILWLYF) threads the bilayer. The Extracellular segment spans residues 176-189 (ETGTWVYPVFAKLS). The helical transmembrane segment at 190 to 210 (LLGLAAFFSLSYVFIASIYLL) threads the bilayer. The Cytoplasmic portion of the chain corresponds to 211–230 (GEKLNHWKWGDMRQPRKKRK).

It belongs to the AIG1 family. As to expression, expressed in cultured endothelial cells and in placenta.

Its subcellular location is the cell membrane. The catalysed reaction is 9-hexadecanoyloxy-octadecanoate + H2O = 9-hydroxy-octadecanoate + hexadecanoate + H(+). It catalyses the reaction 12-hexadecanoyloxy-octadecanoate + H2O = 12-hydroxyoctadecanoate + hexadecanoate + H(+). The enzyme catalyses 9-(9Z-hexadecenoyloxy)-octadecanoate + H2O = (9Z)-hexadecenoate + 9-hydroxy-octadecanoate + H(+). It carries out the reaction 12-(9Z-hexadecenoyloxy)-octadecanoate + H2O = 12-hydroxyoctadecanoate + (9Z)-hexadecenoate + H(+). The catalysed reaction is 13-(9Z-hexadecenoyloxy)-octadecanoate + H2O = 13-hydroxy-octadecanoate + (9Z)-hexadecenoate + H(+). It catalyses the reaction 9-octadecanoyloxy-octadecanoate + H2O = 9-hydroxy-octadecanoate + octadecanoate + H(+). The enzyme catalyses 12-octadecanoyloxy-octadecanoate + H2O = 12-hydroxyoctadecanoate + octadecanoate + H(+). It carries out the reaction 13-octadecanoyloxy-octadecanoate + H2O = 13-hydroxy-octadecanoate + octadecanoate + H(+). The catalysed reaction is 9-(9Z-octadecenoyloxy)-octadecanoate + H2O = 9-hydroxy-octadecanoate + (9Z)-octadecenoate + H(+). It catalyses the reaction 12-(9Z-octadecenoyloxy)-octadecanoate + H2O = 12-hydroxyoctadecanoate + (9Z)-octadecenoate + H(+). The enzyme catalyses 13-(9Z-octadecenoyloxy)-octadecanoate + H2O = 13-hydroxy-octadecanoate + (9Z)-octadecenoate + H(+). It carries out the reaction 5-(9Z-octadecenoyloxy)-octadecanoate + H2O = 5-hydroxy-octadecanoate + (9Z)-octadecenoate + H(+). Its activity is regulated as follows. Inhibited by N-hydroxyhydantoin carbamate JJH260 and beta-lactone KC01. Hydrolyzes bioactive fatty-acid esters of hydroxy-fatty acids (FAHFAs), but not other major classes of lipids. Show a preference for FAHFAs with branching distal from the carboxylate head group of the lipids. Regulates the expression and the cell-associated anticoagulant activity of the inhibitor TFPI in endothelial cells (in vitro). The polypeptide is Androgen-dependent TFPI-regulating protein (ADTRP) (Homo sapiens (Human)).